A 751-amino-acid chain; its full sequence is Catalase-peroxidase (751 aa).

The interval 1 to 21 (MSNESKCPFHQTAGGGTTNRD) is disordered. The segment at residues 90-244 (WHSAGTYRIG…LAAVQMGLIY (155 aa)) is a cross-link (tryptophyl-tyrosyl-methioninium (Trp-Tyr) (with M-270)). The active-site Proton acceptor is H91. The tryptophyl-tyrosyl-methioninium (Tyr-Met) (with W-90) cross-link spans 244–270 (YVNPEGPEGNPDPVASGKDIRETFGRM). H285 is a binding site for heme b. Positions 365-390 (AHQWRPKEGKGAGTVPDAHDPGKKHA) are disordered.

It belongs to the peroxidase family. Peroxidase/catalase subfamily. In terms of assembly, homodimer or homotetramer. Heme b serves as cofactor. In terms of processing, formation of the three residue Trp-Tyr-Met cross-link is important for the catalase, but not the peroxidase activity of the enzyme.

It carries out the reaction H2O2 + AH2 = A + 2 H2O. The enzyme catalyses 2 H2O2 = O2 + 2 H2O. Functionally, bifunctional enzyme with both catalase and broad-spectrum peroxidase activity. This chain is Catalase-peroxidase, found in Pseudomonas putida (strain GB-1).